Reading from the N-terminus, the 100-residue chain is MARKSLIQREKGRLKLENKYHFIRRSSKNEISKVPSLSDKWEIYGKLESPPRNSAPTRLRRRCFYTGRPRANYRDFGLCGHILREMVNACLLPGATRSSW.

This sequence belongs to the universal ribosomal protein uS14 family. Part of the 30S ribosomal subunit.

Its subcellular location is the plastid. Functionally, binds 16S rRNA, required for the assembly of 30S particles. This is Small ribosomal subunit protein uS14c from Epifagus virginiana (Beechdrops).